Here is a 293-residue protein sequence, read N- to C-terminus: Probable 2-(5''-triphosphoribosyl)-3'-dephosphocoenzyme-A synthase (293 aa).

It belongs to the CitG/MdcB family.

The catalysed reaction is 3'-dephospho-CoA + ATP = 2'-(5''-triphospho-alpha-D-ribosyl)-3'-dephospho-CoA + adenine. Functionally, involved in the formation of 2-(5''-phosphoribosyl)-3'-dephosphocoenzyme-A, the prosthetic group of the acyl-carrier protein of the malonate decarboxylase. The sequence is that of Probable 2-(5''-triphosphoribosyl)-3'-dephosphocoenzyme-A synthase from Pseudomonas aeruginosa (strain UCBPP-PA14).